Consider the following 261-residue polypeptide: Transmembrane protein 106A (261 aa).

Residues 95 to 115 (VFLAVSICLVTSSLIIFFLFP) form a helical membrane-spanning segment.

Belongs to the TMEM106 family.

It is found in the cell membrane. In terms of biological role, activates macrophages and polarizes them into M1-like macrophages through the activation of the MAPK and NF-kappaB signaling pathway. Upon activation, up-regulates the expression of CD80, CD86, CD69 and MHC II on macrophages, and induces the release of pro-inflammatory cytokines such as TNF, IL1B, IL6, CCL2 and nitric oxide. May play a role in inhibition of proliferation and migration. This Bos taurus (Bovine) protein is Transmembrane protein 106A (TMEM106A).